The primary structure comprises 850 residues: Protein SEY1 (850 aa).

The tract at residues 1–27 is disordered; that stretch reads MSDLPPPDLGSEEISVSPTSSSSSFVP. Residues 1–741 lie on the Cytoplasmic side of the membrane; that stretch reads MSDLPPPDLG…KRALIQHVTH (741 aa). Positions 12-27 are enriched in low complexity; that stretch reads EEISVSPTSSSSSFVP. The GB1/RHD3-type G domain maps to 64 to 297; it reads NNNYHIVSVF…NEDFLFKKYY (234 aa). GTP is bound at residue 74–81; sequence GSQSTGKS. The chain crosses the membrane as a helical span at residues 742–762; it reads IPYYIYIVILVLGWNEFMAVL. Topologically, residues 763–765 are lumenal; the sequence is RNP. Residues 766 to 786 traverse the membrane as a helical segment; that stretch reads FFFTLLLMLGAGTYVLYHLNL. Topologically, residues 787–850 are cytoplasmic; it reads LKPAMVVVQR…SDLTPPGEGS (64 aa). The interval 816–850 is disordered; that stretch reads QPQEHAKRLSKMAGITEDKPEEIEMSDLTPPGEGS.

It belongs to the TRAFAC class dynamin-like GTPase superfamily. GB1/RHD3 GTPase family. RHD3 subfamily.

It is found in the endoplasmic reticulum membrane. Its function is as follows. Cooperates with the reticulon proteins and tubule-shaping DP1 family proteins to generate and maintain the structure of the tubular endoplasmic reticulum network. Has GTPase activity, which is required for its function in ER organization. This Meyerozyma guilliermondii (strain ATCC 6260 / CBS 566 / DSM 6381 / JCM 1539 / NBRC 10279 / NRRL Y-324) (Yeast) protein is Protein SEY1.